The primary structure comprises 200 residues: Holliday junction resolvase RecU (200 aa).

A disordered region spans residues 1-25 (MTIRYPNGKRYNQASQPHKTPIKKH). Residues Thr85, Asp87, Glu100, and Gln119 each contribute to the Mg(2+) site.

Belongs to the RecU family. The cofactor is Mg(2+).

Its subcellular location is the cytoplasm. It carries out the reaction Endonucleolytic cleavage at a junction such as a reciprocal single-stranded crossover between two homologous DNA duplexes (Holliday junction).. Functionally, endonuclease that resolves Holliday junction intermediates in genetic recombination. Cleaves mobile four-strand junctions by introducing symmetrical nicks in paired strands. Promotes annealing of linear ssDNA with homologous dsDNA. Required for DNA repair, homologous recombination and chromosome segregation. The polypeptide is Holliday junction resolvase RecU (Bacillus thuringiensis (strain Al Hakam)).